A 244-amino-acid chain; its full sequence is 2-C-methyl-D-erythritol 4-phosphate cytidylyltransferase (244 aa).

This sequence belongs to the IspD/TarI cytidylyltransferase family. IspD subfamily.

It carries out the reaction 2-C-methyl-D-erythritol 4-phosphate + CTP + H(+) = 4-CDP-2-C-methyl-D-erythritol + diphosphate. Its pathway is isoprenoid biosynthesis; isopentenyl diphosphate biosynthesis via DXP pathway; isopentenyl diphosphate from 1-deoxy-D-xylulose 5-phosphate: step 2/6. Its function is as follows. Catalyzes the formation of 4-diphosphocytidyl-2-C-methyl-D-erythritol from CTP and 2-C-methyl-D-erythritol 4-phosphate (MEP). This is 2-C-methyl-D-erythritol 4-phosphate cytidylyltransferase from Solibacter usitatus (strain Ellin6076).